An 874-amino-acid polypeptide reads, in one-letter code: MKSAEIREAFLRFFEEQGHTRVASSSLIPNNDPTLLFTNAGMNQFKDCFLGAEKRAYTRAVSSQKCVRAGGKHNDLENVGYTARHHTFFEMLGNFSFGDYFKRDAITFAWTFLTSEQWLNLPKEKLWVTVYATDDEAYDIWTKEVGVPAERMVRIGDNKGAPYASDNFWTMGDTGPCGPCTEIFYDHGPDIWGGPPGSPEEDGDRYIEIWNNVFMQFNRTADGVLHPLPAPSVDTGMGLERVSAVLQHVHSNYEIDLFQNLLAAAAKAIGCSNDGQASLKVVADHIRSCGFLIADGVLPSNEGRGYVLRRIIRRACRHGNKLGAKGSFFYQIVAALAAEMGEAFPELKSQQAHIERVLKAEEEQFAKTLEQGLRILEQDLAQLKGDVVPGDVVFKLYDTYGFPMDLTADIARERELTIDEAGFEREMDAQRERARSASAFGMDYNSLVKVDSATEFLGYDATEAQGKIIALYKDGQAVDQLGEGEQGVVVLDRTPFYAESGGQVGDTGFLQAGAARFDVRDTTKTGGAFLHHGVVASGALVIGSPVEAKVDADVQHATSLNHSATHLLHEALRQVLGEHVQQKGSLVDSQRLRFDFSHFEALKPEQIKQLEDIVNREVRKNTAVETELTDIETAKAKGAMALFGEKYGDTVRVLSMGGDFSVELCGGIHAKRTGDISLFKIISEGGVASGVRRIEAVTGAAALAYLNAAEEQVKEAAQLVKGNRDNLIDKLSAVLERNRQLEKQLEQLQAKAASAAGDDLSNAAVEVKGAKVLAARLDGQDGKALLALVDQLKNKLGHAVILLGSEHEGKVVLVAGVTKDLSSQLKAGDLMKQAAAAVGGKGGGRPDMAQGGGVDVAALDQALALAVPFAEQGL.

Residues His-562, His-566, Cys-665, and His-669 each coordinate Zn(2+).

Belongs to the class-II aminoacyl-tRNA synthetase family. Zn(2+) is required as a cofactor.

It is found in the cytoplasm. The enzyme catalyses tRNA(Ala) + L-alanine + ATP = L-alanyl-tRNA(Ala) + AMP + diphosphate. Catalyzes the attachment of alanine to tRNA(Ala) in a two-step reaction: alanine is first activated by ATP to form Ala-AMP and then transferred to the acceptor end of tRNA(Ala). Also edits incorrectly charged Ser-tRNA(Ala) and Gly-tRNA(Ala) via its editing domain. In Pseudomonas putida (strain GB-1), this protein is Alanine--tRNA ligase.